The primary structure comprises 524 residues: Bifunctional methyltransferase (524 aa).

Positions 1-306 are hemK; sequence MQCSIKQILS…GHSRVILFSP (306 aa). The segment at 1–308 is RF MTase; sequence MQCSIKQILS…SRVILFSPIN (308 aa). Residues 146 to 150, D169, W198, N213, E353, E378, N405, and D427 contribute to the S-adenosyl-L-methionine site; that span reads GTGSG. 213–216 contributes to the substrate binding site; sequence NPPY. The interval 307 to 524 is tRNA (guanine-N(7)-)-methyltransferase; the sequence is INLNRSYARR…MILRHVLGDH (218 aa). The interval 311 to 524 is tRNA MTase; it reads RSYARRIGKS…MILRHVLGDH (214 aa). D427 is a catalytic residue. Residues K431 and D463 each contribute to the substrate site.

It in the C-terminal section; belongs to the class I-like SAM-binding methyltransferase superfamily. TrmB family. This sequence in the N-terminal section; belongs to the protein N5-glutamine methyltransferase family. PrmC subfamily.

The catalysed reaction is L-glutaminyl-[peptide chain release factor] + S-adenosyl-L-methionine = N(5)-methyl-L-glutaminyl-[peptide chain release factor] + S-adenosyl-L-homocysteine + H(+). It catalyses the reaction guanosine(46) in tRNA + S-adenosyl-L-methionine = N(7)-methylguanosine(46) in tRNA + S-adenosyl-L-homocysteine. In terms of biological role, methylates the class 1 translation termination release factors RF1/PrfA and RF2/PrfB on the glutamine residue of the universally conserved GGQ motif. Catalyzes the formation of N(7)-methylguanine at position 46 (m7G46) in tRNA. The protein is Bifunctional methyltransferase (prmC/trmB) of Rickettsia conorii (strain ATCC VR-613 / Malish 7).